The chain runs to 406 residues: uncharacterized protein (406 aa).

This is an uncharacterized protein from Aquifex aeolicus (strain VF5).